Reading from the N-terminus, the 437-residue chain is MGSLKIYPSKLSGDVKIPPSKSMAHRAVICSSLSNGKSRISNIDFSDDIIATIRAMTSLGAIIEKKEDILEISGIFSKEGILNRENQLNQPKLTIDCNESGSTLRFLVPISLAFDGVKRFIGRGNLGKRPLDTYYEIFDRQNIKYSYKENQLDLIISGKLKPDEFRVKGNISSQFITGLLFILPTLESDSKIIITTELESKGYLDLTLSTIKDFGVEIINNNYKEFIIKGNQTYKARDYKVEGDYSQGAFYLSADAIGEDISILDLKEDSLQGDSEVVEILSRMGMEILREGNKIKGITNGLNGTLIDASQCPDIIPVLSVVASLSIGKTTIINAGRLRIKECDRLHAINVELSKLGANIEEKEDSLIIEGVSKLNGGVEVWSHKDHRIAMTLAIASCRCDKPIILKDFECVSKSYPHFFKDFKMLGGRIDEWNMGK.

Positions 21, 22, and 26 each coordinate 3-phosphoshikimate. Lysine 21 provides a ligand contact to phosphoenolpyruvate. Residues glycine 101 and arginine 129 each coordinate phosphoenolpyruvate. Positions 172, 173, 174, 200, 314, and 341 each coordinate 3-phosphoshikimate. Position 174 (glutamine 174) interacts with phosphoenolpyruvate. Aspartate 314 acts as the Proton acceptor in catalysis. The phosphoenolpyruvate site is built by arginine 345, arginine 388, and lysine 414.

Belongs to the EPSP synthase family. In terms of assembly, monomer.

Its subcellular location is the cytoplasm. It catalyses the reaction 3-phosphoshikimate + phosphoenolpyruvate = 5-O-(1-carboxyvinyl)-3-phosphoshikimate + phosphate. It functions in the pathway metabolic intermediate biosynthesis; chorismate biosynthesis; chorismate from D-erythrose 4-phosphate and phosphoenolpyruvate: step 6/7. Functionally, catalyzes the transfer of the enolpyruvyl moiety of phosphoenolpyruvate (PEP) to the 5-hydroxyl of shikimate-3-phosphate (S3P) to produce enolpyruvyl shikimate-3-phosphate and inorganic phosphate. The protein is 3-phosphoshikimate 1-carboxyvinyltransferase of Clostridioides difficile (strain 630) (Peptoclostridium difficile).